A 2495-amino-acid polypeptide reads, in one-letter code: Zinc finger protein 462 (2495 aa).

3 consecutive C2H2-type zinc fingers follow at residues 4–27 (LQCD…QDVH), 108–131 (FQCK…RKVH), and 162–185 (FSCQ…KMYH). Lysine 20 participates in a covalent cross-link: Glycyl lysine isopeptide (Lys-Gly) (interchain with G-Cter in SUMO1); alternate. Lysine 20 participates in a covalent cross-link: Glycyl lysine isopeptide (Lys-Gly) (interchain with G-Cter in SUMO2); alternate. The tract at residues 215–241 (PCKELPAEVVERSILESMVKPLTKSRG) is interaction with PBX1. Residues lysine 234 and lysine 271 each participate in a glycyl lysine isopeptide (Lys-Gly) (interchain with G-Cter in SUMO2) cross-link. 3 disordered regions span residues 278 to 301 (QQEG…NSTY), 329 to 357 (RPNS…NSGL), and 370 to 395 (DMTN…DLNE). Over residues 332–343 (SSSTSKFSSSMS) the composition is skewed to low complexity. Residues lysine 337, lysine 348, and lysine 350 each participate in a glycyl lysine isopeptide (Lys-Gly) (interchain with G-Cter in SUMO2) cross-link. Phosphoserine occurs at positions 351 and 355. Residues 370–387 (DMTNSSADLDTNSMLNDS) show a composition bias toward polar residues. Lysine 429 is covalently cross-linked (Glycyl lysine isopeptide (Lys-Gly) (interchain with G-Cter in SUMO2)). 2 C2H2-type zinc fingers span residues 440 to 463 (FQCP…ENIH) and 471 to 493 (YKCD…KQCH). Lysine 485 participates in a covalent cross-link: Glycyl lysine isopeptide (Lys-Gly) (interchain with G-Cter in SUMO2). The tract at residues 492–590 (CHTGTSDWDT…PQPPTQAPPL (99 aa)) is disordered. The segment covering 493 to 502 (HTGTSDWDTV) has biased composition (polar residues). The segment covering 503–515 (NSQSESLSSSLNE) has biased composition (low complexity). Residues 542-590 (PPQPPPPLPPPPPPPSQPLPQPPPPPLQSPHQVPPPTQQPQPPTQAPPL) are compositionally biased toward pro residues. A C2H2-type 6 zinc finger spans residues 593–616 (YKCTMCSYSTMTLKGLRVHQQHKH). Glycyl lysine isopeptide (Lys-Gly) (interchain with G-Cter in SUMO2) cross-links involve residues lysine 624, lysine 650, and lysine 661. Positions 629–654 (PSSLPLENETDSHPSSSNTVKKSQTS) are disordered. Positions 641 to 654 (HPSSSNTVKKSQTS) are enriched in polar residues. Serine 681 is modified (phosphoserine). Lysine 699 participates in a covalent cross-link: Glycyl lysine isopeptide (Lys-Gly) (interchain with G-Cter in SUMO2). C2H2-type zinc fingers lie at residues 835-858 (YYCK…QRMH), 878-900 (YRCL…YGEH), and 917-940 (YRCR…QRMH). Residue lysine 978 forms a Glycyl lysine isopeptide (Lys-Gly) (interchain with G-Cter in SUMO2) linkage. The interval 980–999 (MATSTPVARGGGLPATFNKN) is disordered. The C2H2-type 10 zinc-finger motif lies at 1023 to 1046 (YDCDVCSFASPNMHSVLVHYQKKH). A Phosphoserine modification is found at serine 1083. Lysine 1128 is covalently cross-linked (Glycyl lysine isopeptide (Lys-Gly) (interchain with G-Cter in SUMO2)). Serine 1159 is modified (phosphoserine). Residues lysine 1196, lysine 1204, lysine 1210, and lysine 1232 each participate in a glycyl lysine isopeptide (Lys-Gly) (interchain with G-Cter in SUMO2) cross-link. C2H2-type zinc fingers lie at residues 1254–1277 (LKCR…KKDH) and 1459–1482 (YQCT…GKKH). Lysine 1488 is covalently cross-linked (Glycyl lysine isopeptide (Lys-Gly) (interchain with G-Cter in SUMO2)). The C2H2-type 13 zinc finger occupies 1504 to 1527 (YKCRHCPYINTRIHGVLTHYQKRH). Residues lysine 1560 and lysine 1580 each participate in a glycyl lysine isopeptide (Lys-Gly) (interchain with G-Cter in SUMO2) cross-link. C2H2-type zinc fingers lie at residues 1566–1589 (YRCK…EKYH), 1649–1672 (FRCQ…RIKH), and 1686–1709 (FKCA…QKRH). Residues lysine 1687 and lysine 1769 each participate in a glycyl lysine isopeptide (Lys-Gly) (interchain with G-Cter in SUMO2) cross-link. The segment at 1881–1903 (FQCKHCDSKLQSIAELTSHLNIH) adopts a C2H2-type 17 zinc-finger fold. Lysine 1935 participates in a covalent cross-link: Glycyl lysine isopeptide (Lys-Gly) (interchain with G-Cter in SUMO2). The segment at 1957-1981 (YKCKFCVEVHPTLRAICNHLRKHVQ) adopts a C2H2-type 18; degenerate zinc-finger fold. The residue at position 1993 (lysine 1993) is an N6-methyllysine. C2H2-type zinc fingers lie at residues 2014 to 2037 (YSCQ…QTHH), 2043 to 2066 (FRCK…LKAH), and 2072 to 2095 (YKCS…LKVH). Lysine 2093 is covalently cross-linked (Glycyl lysine isopeptide (Lys-Gly) (interchain with G-Cter in SUMO2)). Composition is skewed to polar residues over residues 2112–2121 (SHAHPSSQKA) and 2132–2149 (DSSY…NHYQ). Residues 2112–2172 (SHAHPSSQKA…VPPSGTAAGT (61 aa)) are disordered. Phosphoserine occurs at positions 2161 and 2166. 3 consecutive C2H2-type zinc fingers follow at residues 2180 to 2203 (LHCE…RDKH), 2209 to 2232 (FKCK…EAGH), and 2243 to 2265 (LRCP…IVLH). A Glycyl lysine isopeptide (Lys-Gly) (interchain with G-Cter in SUMO2) cross-link involves residue lysine 2282. 2 C2H2-type zinc fingers span residues 2289 to 2311 (FRCD…IEKH) and 2317 to 2340 (YKCQ…RDEH). Residues 2361 to 2387 (KEKIESSSSEDEDKDDEMSSKAEDREL) are disordered. Residues 2377 to 2387 (EMSSKAEDREL) are compositionally biased toward basic and acidic residues. The C2H2-type 27 zinc-finger motif lies at 2403–2425 (FPCEFCGRAFSQGSEWERHVLRH). Lysine 2493 participates in a covalent cross-link: Glycyl lysine isopeptide (Lys-Gly) (interchain with G-Cter in SUMO2).

Interacts with PBX1 isoform PBX1b; this interaction prevents PBX1-HOXA9 heterodimer from forming and binding to DNA. Expressed in the cerebral cortex (at protein level). Expressed in embryonic stem cells (at protein level). Expressed in heart, liver, kidney, muscle, and female and male genital tracts (at protein level).

The protein localises to the nucleus. Its function is as follows. Zinc finger nuclear factor involved in transcription by regulating chromatin structure and organization. Involved in the pluripotency and differentiation of embryonic stem cells by regulating SOX2, POU5F1/OCT4, and NANOG. By binding PBX1, prevents the heterodimerization of PBX1 and HOXA9 and their binding to DNA. Regulates neuronal development and neural cell differentiation. This chain is Zinc finger protein 462, found in Mus musculus (Mouse).